Here is a 515-residue protein sequence, read N- to C-terminus: Protein NRT1/ PTR FAMILY 4.1 (515 aa).

12 consecutive transmembrane segments (helical) span residues glycine 24–alanine 44, phenylalanine 71–threonine 91, phenylalanine 93–glutamine 113, valine 134–proline 154, leucine 168–valine 188, phenylalanine 204–methionine 224, phenylalanine 298–methionine 318, isoleucine 339–tyrosine 359, isoleucine 381–lysine 401, isoleucine 413–valine 433, alanine 461–leucine 481, and leucine 492–alanine 512.

Belongs to the major facilitator superfamily. Proton-dependent oligopeptide transporter (POT/PTR) (TC 2.A.17) family. As to expression, expressed in siliques and flowers.

Its subcellular location is the membrane. Its function is as follows. Involved in (+) and (-)-abscisic acid transport (ABA) and in gibberellin import. This chain is Protein NRT1/ PTR FAMILY 4.1 (NPF4.1), found in Arabidopsis thaliana (Mouse-ear cress).